A 244-amino-acid chain; its full sequence is 2-C-methyl-D-erythritol 4-phosphate cytidylyltransferase (244 aa).

This sequence belongs to the IspD/TarI cytidylyltransferase family. IspD subfamily.

The enzyme catalyses 2-C-methyl-D-erythritol 4-phosphate + CTP + H(+) = 4-CDP-2-C-methyl-D-erythritol + diphosphate. It participates in isoprenoid biosynthesis; isopentenyl diphosphate biosynthesis via DXP pathway; isopentenyl diphosphate from 1-deoxy-D-xylulose 5-phosphate: step 2/6. Catalyzes the formation of 4-diphosphocytidyl-2-C-methyl-D-erythritol from CTP and 2-C-methyl-D-erythritol 4-phosphate (MEP). The polypeptide is 2-C-methyl-D-erythritol 4-phosphate cytidylyltransferase (Prosthecochloris aestuarii (strain DSM 271 / SK 413)).